The chain runs to 92 residues: Small ribosomal subunit protein uS19 (92 aa).

The protein belongs to the universal ribosomal protein uS19 family.

Its function is as follows. Protein S19 forms a complex with S13 that binds strongly to the 16S ribosomal RNA. This chain is Small ribosomal subunit protein uS19, found in Treponema denticola (strain ATCC 35405 / DSM 14222 / CIP 103919 / JCM 8153 / KCTC 15104).